Reading from the N-terminus, the 267-residue chain is MQEGGLPRAKKRFGQNFLVQPQIVERIVAAIRPASGDHLVEIGPGPGALTKSLLRLLPQFTVVELDRDMIAGLRALAPPEQLRVLQADALEVDFAALAGAGNALRIVGNLPYNVATPLIFHILEHAEQVRDMHFMLQKEVVDRVVAMPGSKAYGRLSVMIQAYCAVESLFTVAPGNFFPVPKVDSAFMRLIPHRPGLLPPHLQAPFARIVATSFAQRRKTLANNLRGILSADDLRGLQIDPGSRAETLDQAAFFRLAEATVEQGNRS.

S-adenosyl-L-methionine contacts are provided by asparagine 16, leucine 18, glycine 43, glutamate 64, aspartate 88, and asparagine 109.

The protein belongs to the class I-like SAM-binding methyltransferase superfamily. rRNA adenine N(6)-methyltransferase family. RsmA subfamily.

The protein localises to the cytoplasm. It catalyses the reaction adenosine(1518)/adenosine(1519) in 16S rRNA + 4 S-adenosyl-L-methionine = N(6)-dimethyladenosine(1518)/N(6)-dimethyladenosine(1519) in 16S rRNA + 4 S-adenosyl-L-homocysteine + 4 H(+). Specifically dimethylates two adjacent adenosines (A1518 and A1519) in the loop of a conserved hairpin near the 3'-end of 16S rRNA in the 30S particle. May play a critical role in biogenesis of 30S subunits. The chain is Ribosomal RNA small subunit methyltransferase A from Acidithiobacillus ferrooxidans (strain ATCC 23270 / DSM 14882 / CIP 104768 / NCIMB 8455) (Ferrobacillus ferrooxidans (strain ATCC 23270)).